A 274-amino-acid chain; its full sequence is MEEDFNMSTPGVKVGVXEEEKKLSYYKYYEQDLAPVPAEKIAILQGGPIAPEKCIPFDERNKFLKGEDDEYANIGFGVAADGTALVCNTTYMPGVTGEMLDWWFPWHSVGSDLRYKIWDPEDHYFARAYPASYVVDPNVPMNQKTWGVDHYIMEDVGPGPEFLKLCFKRPADFGYDESIIGTEKCESLVCAIGESSCAAAMTHKWHPYKDGVLFESRFWIGYRIDEEGNIVKAIPEGVSIPPFVPQGLFAHNIKEFTNLAAILPTLYAEEKDTF.

4 residues coordinate Zn(2+): H123, E154, H251, and E255.

Belongs to the DAPG/phloretin hydrolase family. As to quaternary structure, homodimer. The cofactor is Zn(2+).

It localises to the cytoplasm. The catalysed reaction is phloretin + H2O = phloretate + 1,3,5-trihydroxybenzene + H(+). Functionally, catalyzes the hydrolytic C-C cleavage of phloretin to phloroglucinol and 3-(4-hydroxyphenyl)propionic acid during flavonoid degradation. Also hydrolyzes other C-acylated phenols. The protein is Phloretin hydrolase (phy) of Eubacterium ramulus.